The following is a 196-amino-acid chain: Peptidyl-tRNA hydrolase (196 aa).

A tRNA-binding site is contributed by Y17. H22 (proton acceptor) is an active-site residue. Residues Y69, N71, and N117 each coordinate tRNA.

This sequence belongs to the PTH family. In terms of assembly, monomer.

The protein localises to the cytoplasm. The catalysed reaction is an N-acyl-L-alpha-aminoacyl-tRNA + H2O = an N-acyl-L-amino acid + a tRNA + H(+). Hydrolyzes ribosome-free peptidyl-tRNAs (with 1 or more amino acids incorporated), which drop off the ribosome during protein synthesis, or as a result of ribosome stalling. Functionally, catalyzes the release of premature peptidyl moieties from peptidyl-tRNA molecules trapped in stalled 50S ribosomal subunits, and thus maintains levels of free tRNAs and 50S ribosomes. In Pseudarthrobacter chlorophenolicus (strain ATCC 700700 / DSM 12829 / CIP 107037 / JCM 12360 / KCTC 9906 / NCIMB 13794 / A6) (Arthrobacter chlorophenolicus), this protein is Peptidyl-tRNA hydrolase.